We begin with the raw amino-acid sequence, 712 residues long: Voltage-gated chloride channel TMC4 (712 aa).

The tract at residues 1 to 39 (MEENPTLESEAWGSSRGWLAPREARGAPCSSPGPSLSSV) is disordered. The Extracellular segment spans residues 1–168 (MEENPTLESE…GTESYFSLLR (168 aa)). The N-linked (GlcNAc...) asparagine glycan is linked to asparagine 107. The helical transmembrane segment at 169–189 (FLLLLNVLASVLMACMTLLPT) threads the bilayer. Residues 190–249 (WLGGAPPGPPGPDISSPCGSYNPHSQGLVTFATQLFNLLSGEGYLEWSPLFYGFYPPRPR) are Cytoplasmic-facing. A helical membrane pass occupies residues 250 to 270 (LAVTYLCWAFAVGLICLLLIL). The Extracellular segment spans residues 271-348 (HRSVSGLKQT…GQQARVWLVR (78 aa)). A helical transmembrane segment spans residues 349-369 (VLLNLLVVALLGAAFYGVYWA). Over 370–394 (TGCTVELQEMPLVQELPLLKLGVNY) the chain is Cytoplasmic. The chain crosses the membrane as a helical span at residues 395-415 (LPSIFIAGVNFVLPPVFKLIA). At 416-425 (PLEGYTRSRQ) the chain is on the extracellular side. Residues 426 to 446 (IVFILLRTVFLRLASLVVLLF) traverse the membrane as a helical segment. Residues 447-483 (SLWNQITCGGDSEAEDCKTCGYNYKQLPCWETVLGQE) are Cytoplasmic-facing. A helical transmembrane segment spans residues 484–504 (MYKLLLFDLLTVLAVALLIQF). The Extracellular portion of the chain corresponds to 505-542 (PRKLLCGLCPGALGRLAGTQEFQVPDEVLGLIYAQTVV). Residues 543-565 (WVGSFFCPLLPLLNTVKFLLLFY) form a helical membrane-spanning segment. Residues 566-592 (LKKLTLFSTCSPAARTFRASAANFFFP) lie on the Cytoplasmic side of the membrane. The helical transmembrane segment at 593–613 (LVLLLGLAISSVPLLYSIFLI) threads the bilayer. Residues 614-654 (PPSKLCGPFRGQSSIWAQIPESISSLPETTQNFLFFLGTQA) are Extracellular-facing. Residues 655-677 (FAVPLLLISSILMAYTVALANSY) traverse the membrane as a helical segment. Residues 678–712 (GRLISELKRQRQTEAQNKVFLARRAVALTSTKPAL) lie on the Cytoplasmic side of the membrane.

It belongs to the TMC family.

The protein resides in the membrane. The catalysed reaction is chloride(in) = chloride(out). Voltage-gated chloride channel involved in high-concentration salt taste sensation. Depolarization induced by high NaCl concentration may trigger the activation of TMC4-mediated chloride influx into taste bud cells, helping the return to resting potential. Also allows permeation of organic anions including gluconate, but their current amplitudes at positive potentials are less than that of chloride. Involved in pH and temperature-dependent modulation of salty taste. The polypeptide is Voltage-gated chloride channel TMC4 (Homo sapiens (Human)).